Here is a 210-residue protein sequence, read N- to C-terminus: Large ribosomal subunit protein uL3 (210 aa).

The segment at 126-167 is disordered; that stretch reads WGFQRGPSGHGSKNIREPGSTGNATFPGRVIKGKKMPGQKGN. A compositionally biased stretch (basic residues) spans 156–167; that stretch reads IKGKKMPGQKGN.

It belongs to the universal ribosomal protein uL3 family. In terms of assembly, part of the 50S ribosomal subunit. Forms a cluster with proteins L14 and L19.

Functionally, one of the primary rRNA binding proteins, it binds directly near the 3'-end of the 23S rRNA, where it nucleates assembly of the 50S subunit. This Syntrophobacter fumaroxidans (strain DSM 10017 / MPOB) protein is Large ribosomal subunit protein uL3.